Consider the following 156-residue polypeptide: MNINLTLIGQAIAFAFFVAFCMKFVWPPLINAISERQRKIADGLNAAEKAKADLADAQAQVKQELDAAKAQAAQLIEQANRRAAQLIEEARTQAAAEGERIRQQAKEAVDQEINSAREELRQQVAALVVTGAEKILNQQVDAEAHNAMLSQLAAKL.

Residues 5–25 (LTLIGQAIAFAFFVAFCMKFV) traverse the membrane as a helical segment.

The protein belongs to the ATPase B chain family. F-type ATPases have 2 components, F(1) - the catalytic core - and F(0) - the membrane proton channel. F(1) has five subunits: alpha(3), beta(3), gamma(1), delta(1), epsilon(1). F(0) has three main subunits: a(1), b(2) and c(10-14). The alpha and beta chains form an alternating ring which encloses part of the gamma chain. F(1) is attached to F(0) by a central stalk formed by the gamma and epsilon chains, while a peripheral stalk is formed by the delta and b chains.

It is found in the cell inner membrane. F(1)F(0) ATP synthase produces ATP from ADP in the presence of a proton or sodium gradient. F-type ATPases consist of two structural domains, F(1) containing the extramembraneous catalytic core and F(0) containing the membrane proton channel, linked together by a central stalk and a peripheral stalk. During catalysis, ATP synthesis in the catalytic domain of F(1) is coupled via a rotary mechanism of the central stalk subunits to proton translocation. In terms of biological role, component of the F(0) channel, it forms part of the peripheral stalk, linking F(1) to F(0). The protein is ATP synthase subunit b of Acinetobacter baumannii (strain SDF).